We begin with the raw amino-acid sequence, 171 residues long: Putative MucR family transcriptional regulatory protein y4pD (171 aa).

Belongs to the ros/MucR family.

In Sinorhizobium fredii (strain NBRC 101917 / NGR234), this protein is Putative MucR family transcriptional regulatory protein y4pD.